A 449-amino-acid polypeptide reads, in one-letter code: Cryptochrome DASH (449 aa).

Residues 15 to 147 (RLGLFVFRND…PFHETPNNTL (133 aa)) form the Photolyase/cryptochrome alpha/beta domain.

It belongs to the DNA photolyase class-1 family. Requires FAD as cofactor. The cofactor is (6R)-5,10-methylene-5,6,7,8-tetrahydrofolate.

In terms of biological role, may have a photoreceptor function. Binds DNA; probably functions as a transcriptional repressor. The sequence is that of Cryptochrome DASH (cry) from Idiomarina loihiensis (strain ATCC BAA-735 / DSM 15497 / L2-TR).